A 502-amino-acid polypeptide reads, in one-letter code: Transmembrane prolyl 4-hydroxylase (502 aa).

The segment at 1–29 is disordered; sequence MAAAAVTGQRPETAAAEEASRPQWAPPDH. Residues 1–60 are Cytoplasmic-facing; it reads MAAAAVTGQRPETAAAEEASRPQWAPPDHCQAQAAAGLGDGEDAPVRPLCKPRGICSRAY. The helical; Signal-anchor for type II membrane protein transmembrane segment at 61–81 threads the bilayer; it reads FLVLMVFVHLYLGNVLALLLF. Over 82 to 502 the chain is Lumenal; that stretch reads VHYSNGDESS…RAYRDARVEL (421 aa). The interval 89–111 is disordered; that stretch reads ESSDPGPQHRAQGPGPEPTLGPL. EF-hand domains follow at residues 185 to 220 and 224 to 259; these read TMQV…GNGW and PESI…DFHK. Positions 198, 200, 202, 204, 209, 237, 239, 241, and 248 each coordinate Ca(2+). Residues 310–460 form the Fe2OG dioxygenase domain; that stretch reads LSEPLQVVRY…KWIANNWINV (151 aa). Histidine 328 and aspartate 330 together coordinate Fe cation. Residues asparagine 348 and asparagine 368 are each glycosylated (N-linked (GlcNAc...) asparagine). Glutamate 374 serves as a coordination point for Fe cation. The N-linked (GlcNAc...) asparagine glycan is linked to asparagine 382. Lysine 451 contributes to the 2-oxoglutarate binding site.

Homodimer. It depends on Fe(2+) as a cofactor. Requires L-ascorbate as cofactor. Glycosylated. In terms of tissue distribution, widely expressed with highest levels in adult pancreas, heart, skeletal muscle, brain, placenta, kidney and adrenal gland. Expressed at lower levels in epiphyseal cartilage and in fibroblasts.

It is found in the endoplasmic reticulum membrane. It catalyses the reaction L-prolyl-[hypoxia-inducible factor alpha subunit] + 2-oxoglutarate + O2 = trans-4-hydroxy-L-prolyl-[hypoxia-inducible factor alpha subunit] + succinate + CO2. In terms of biological role, catalyzes the post-translational formation of 4-hydroxyproline in hypoxia-inducible factor (HIF) alpha proteins. Hydroxylates HIF1A at 'Pro-402' and 'Pro-564'. May function as a cellular oxygen sensor and, under normoxic conditions, may target HIF through the hydroxylation for proteasomal degradation via the von Hippel-Lindau ubiquitination complex. This is Transmembrane prolyl 4-hydroxylase (P4HTM) from Homo sapiens (Human).